The primary structure comprises 259 residues: Aliphatic sulfonates import ATP-binding protein SsuB 1 (259 aa).

Positions 15–229 constitute an ABC transporter domain; it reads VECRRITRRF…QASTPGFQAL (215 aa). 47–54 lines the ATP pocket; that stretch reads GSSGSGKT.

The protein belongs to the ABC transporter superfamily. Aliphatic sulfonates importer (TC 3.A.1.17.2) family. The complex is composed of two ATP-binding proteins (SsuB), two transmembrane proteins (SsuC) and a solute-binding protein (SsuA).

The protein resides in the cell inner membrane. The enzyme catalyses ATP + H2O + aliphatic sulfonate-[sulfonate-binding protein]Side 1 = ADP + phosphate + aliphatic sulfonateSide 2 + [sulfonate-binding protein]Side 1.. Its function is as follows. Part of the ABC transporter complex SsuABC involved in aliphatic sulfonates import. Responsible for energy coupling to the transport system. The protein is Aliphatic sulfonates import ATP-binding protein SsuB 1 of Pseudomonas fluorescens (strain ATCC BAA-477 / NRRL B-23932 / Pf-5).